Reading from the N-terminus, the 195-residue chain is Nicotinamide riboside kinase 2 (195 aa).

Position 9–17 (9–17 (GVTNGGKTT)) interacts with ATP. Thr16 and Asp35 together coordinate Mg(2+). Asp35 functions as the Proton acceptor in the catalytic mechanism. Residues 35–38 (DDFF) and 54–55 (WD) each bind substrate. Residue Arg130 coordinates ATP. Residues Arg131 and 136–137 (YM) each bind substrate. Residues 134–136 (RTY) and 174–176 (KSP) each bind ATP.

It belongs to the uridine kinase family. NRK subfamily. In terms of assembly, monomer. Interacts with ITGB1 alone or when associated with alpha-7, but not with alpha-5. Expressed in skeletal muscle (at protein level).

It catalyses the reaction beta-nicotinamide D-riboside + ATP = beta-nicotinamide D-ribonucleotide + ADP + H(+). The catalysed reaction is beta-D-ribosylnicotinate + ATP = nicotinate beta-D-ribonucleotide + ADP + H(+). The protein operates within cofactor biosynthesis; NAD(+) biosynthesis. Catalyzes the phosphorylation of nicotinamide riboside (NR) and nicotinic acid riboside (NaR) to form nicotinamide mononucleotide (NMN) and nicotinic acid mononucleotide (NaMN). Reduces laminin matrix deposition and cell adhesion to laminin, but not to fibronectin. Involved in the regulation of PXN at the protein level and of PXN tyrosine phosphorylation. May play a role in the regulation of terminal myogenesis. The sequence is that of Nicotinamide riboside kinase 2 (Nmrk2) from Mus musculus (Mouse).